The following is a 267-amino-acid chain: MLTVISPAKRLDWDVATPAGATLPEFQDEAMALVDVARELDVADLRKLMGLSEKLAVLNLDRFASFAEQADTETARPAALAFAGDTYTGLEARSLSDDEMAYAQDHLRILSGLYGVLRPLDLIQAYRLEMGSRLATPRGKTLYDWWGDRIATALNRAAEATDGRLLVNCASQEYFGAVDLSALSVPVVTPVFLEDRDGTTKTVSFFAKKARGAMARFIVQNRVRNLDGLRDFETGGYRFVPDQSTETAPVFVRPYPEAAPAARELAS.

This sequence belongs to the UPF0246 family.

The sequence is that of UPF0246 protein Dshi_3333 from Dinoroseobacter shibae (strain DSM 16493 / NCIMB 14021 / DFL 12).